The primary structure comprises 1500 residues: DNA-directed RNA polymerase subunit beta' (1500 aa).

Zn(2+) contacts are provided by cysteine 60, cysteine 62, cysteine 75, and cysteine 78. The disordered stretch occupies residues 180–199 (DLGGMETAQRSTQRQIEEDY). Aspartate 626, aspartate 628, and aspartate 630 together coordinate Mg(2+). Residues cysteine 1002, cysteine 1075, cysteine 1082, and cysteine 1085 each coordinate Zn(2+). A disordered region spans residues 1440 to 1500 (EVQQAEKSAE…DSDHPDLSSL (61 aa)). Polar residues predominate over residues 1449-1468 (EPTTTALPTTNGHQAPQSDT).

This sequence belongs to the RNA polymerase beta' chain family. The RNAP catalytic core consists of 2 alpha, 1 beta, 1 beta' and 1 omega subunit. When a sigma factor is associated with the core the holoenzyme is formed, which can initiate transcription. Requires Mg(2+) as cofactor. Zn(2+) serves as cofactor.

The enzyme catalyses RNA(n) + a ribonucleoside 5'-triphosphate = RNA(n+1) + diphosphate. DNA-dependent RNA polymerase catalyzes the transcription of DNA into RNA using the four ribonucleoside triphosphates as substrates. The sequence is that of DNA-directed RNA polymerase subunit beta' from Chloroflexus aggregans (strain MD-66 / DSM 9485).